The chain runs to 238 residues: MFNDLLSELTKNILEHGGKKLIVPNEFCECVSKQGNCKLNSWLWDVPGFRRWRVTRLDAGDRLQVLNSVAYPNEQNDMPIMGIDLLWFEKKQKLVAILDFQPLVQDKEYLDRYFDGLKSLKKSFNEFNSDMKSNIYDPTKYFSPWALFCKGGNFEAENILPKIFSSFLKCYWKNLDLSKANENHIKSQEVSILHIDYDKYSAEKDPAHGLFSGFFGKEWSEKYMKEFLFPLSLENINP.

It belongs to the HY2 family.

The catalysed reaction is 15,16-dihydrobiliverdin + oxidized 2[4Fe-4S]-[ferredoxin] = biliverdin IXalpha + reduced 2[4Fe-4S]-[ferredoxin] + 2 H(+). In terms of biological role, catalyzes the two-electron reduction of biliverdin IX-alpha at the C15 methine bridge. This chain is 15,16-dihydrobiliverdin:ferredoxin oxidoreductase, found in Prochlorococcus marinus (strain NATL2A).